Reading from the N-terminus, the 371-residue chain is NADH-ubiquinone oxidoreductase chain 1 (371 aa).

Transmembrane regions (helical) follow at residues 7–27, 44–64, 77–97, 109–129, 153–173, 180–200, 226–246, 263–283, 302–322, and 338–358; these read IISILEVLLVLVPSLLAVAYV, PNAVGYLGLLQAFADALKLLL, LFFLGPVITLIFSLLGYAVIP, LGILYMLAVSSLATYGILLAG, LVLSSAILLVIMLTGSFNLGV, AVLFVLPLLPIFIIFFIGSIA, AVVFVFFFLAEYGSIVLMCIL, VFNILDFVYSNLFIFEINWMV, GWLYGWIIGLKSSIMIFIFIL, and FCWTVLLPIIFALIILVPCIL.

Belongs to the complex I subunit 1 family.

Its subcellular location is the mitochondrion inner membrane. It carries out the reaction a ubiquinone + NADH + 5 H(+)(in) = a ubiquinol + NAD(+) + 4 H(+)(out). In terms of biological role, core subunit of the mitochondrial membrane respiratory chain NADH dehydrogenase (Complex I) that is believed to belong to the minimal assembly required for catalysis. Complex I functions in the transfer of electrons from NADH to the respiratory chain. The immediate electron acceptor for the enzyme is believed to be ubiquinone. The sequence is that of NADH-ubiquinone oxidoreductase chain 1 (ndh-1) from Neurospora crassa (strain ATCC 24698 / 74-OR23-1A / CBS 708.71 / DSM 1257 / FGSC 987).